Reading from the N-terminus, the 156-residue chain is Cellulose synthase operon protein D (156 aa).

It participates in glycan metabolism; bacterial cellulose biosynthesis. Functionally, may have a major role in the perfection of crystallization, involved either in the pore structure itself or in the organization of the pores within the linear array of terminal synthesizing complexes (TCs). This is Cellulose synthase operon protein D from Komagataeibacter sucrofermentans (strain ATCC 700178 / DSM 15973 / CECT 7291 / JCM 9730 / LMG 18788 / BPR 2001) (Acetobacter xylinus subsp. sucrofermentans).